The sequence spans 253 residues: Triosephosphate isomerase (253 aa).

Substrate is bound at residue 9 to 11 (NWK). Histidine 94 functions as the Electrophile in the catalytic mechanism. Residue glutamate 163 is the Proton acceptor of the active site. Substrate is bound by residues glycine 169, serine 209, and 230–231 (GG).

It belongs to the triosephosphate isomerase family. In terms of assembly, homodimer.

It localises to the cytoplasm. The enzyme catalyses D-glyceraldehyde 3-phosphate = dihydroxyacetone phosphate. The protein operates within carbohydrate biosynthesis; gluconeogenesis. Its pathway is carbohydrate degradation; glycolysis; D-glyceraldehyde 3-phosphate from glycerone phosphate: step 1/1. In terms of biological role, involved in the gluconeogenesis. Catalyzes stereospecifically the conversion of dihydroxyacetone phosphate (DHAP) to D-glyceraldehyde-3-phosphate (G3P). This is Triosephosphate isomerase from Dehalococcoides mccartyi (strain ATCC BAA-2100 / JCM 16839 / KCTC 5957 / BAV1).